The following is a 266-amino-acid chain: MAKHQHKKRFGQNFLNNDRIIQQIVAAIAPKPDQHLVEIGPGEAALTGPLLDIVKKLDIIEIDNDLIGPLTKRFSHNPAFHLHHTDALLFDYSQLLEAETETPSLRIVGNLPYNISSPLLFHLLKYARYIQDMHFMLQKEVVERITAQPGVKAYGRLSVMIQYTCETEYLLTVGPENFTPPPKVDSAIVRLRPFEKRPFQAIDDKDFAKLVKQAFSQKRKTLRNNLKGFLNDEQIEACGLDPSVRAEKVPVEAFVLLSNLYHKDKA.

Positions 13, 15, 40, 61, 86, and 110 each coordinate S-adenosyl-L-methionine.

Belongs to the class I-like SAM-binding methyltransferase superfamily. rRNA adenine N(6)-methyltransferase family. RsmA subfamily.

It localises to the cytoplasm. It catalyses the reaction adenosine(1518)/adenosine(1519) in 16S rRNA + 4 S-adenosyl-L-methionine = N(6)-dimethyladenosine(1518)/N(6)-dimethyladenosine(1519) in 16S rRNA + 4 S-adenosyl-L-homocysteine + 4 H(+). Functionally, specifically dimethylates two adjacent adenosines (A1518 and A1519) in the loop of a conserved hairpin near the 3'-end of 16S rRNA in the 30S particle. May play a critical role in biogenesis of 30S subunits. This Hydrogenovibrio crunogenus (strain DSM 25203 / XCL-2) (Thiomicrospira crunogena) protein is Ribosomal RNA small subunit methyltransferase A.